A 1465-amino-acid polypeptide reads, in one-letter code: Vacuolar heme ABC transmembrane exporter abc3 (1465 aa).

Over 1 to 8 (MITANKGL) the chain is Extracellular. Residues 9–29 (SLVLLIPNLFALVSGGLQYVF) form a helical membrane-spanning segment. Over 30–42 (DVRRRIFRPHFSQ) the chain is Cytoplasmic. The chain crosses the membrane as a helical span at residues 43–63 (FWTIWMKFFSIALVIITQIYV). Over 64-69 (GYKTKN) the chain is Extracellular. The helical transmembrane segment at 70 to 90 (IGWNFFSVVTYCFVLFLQFAE) threads the bilayer. Over 91-97 (QSTLRVP) the chain is Cytoplasmic. The chain crosses the membrane as a helical span at residues 98 to 118 (MASLLIFWLLKVVTSLLILLF). The Extracellular segment spans residues 119–129 (SPYIAITSMAR). Residues 130–150 (LLTLITLFCSLVCFISEVYVP) form a helical membrane-spanning segment. 151-152 (PC) serves as a coordination point for heme. Residues 151 to 235 (PCNRVWYSDD…IYHSKNKRRS (85 aa)) lie on the Cytoplasmic side of the membrane. The helical transmembrane segment at 236–256 (LFLWKLLFFNHWKLVALITIT) threads the bilayer. An ABC transmembrane type-1 1 domain is found at 250–539 (VALITITKLI…LPTVISSLLE (290 aa)). Residues 257-291 (KLIQDVLAFVQPTLIQKTILFISSYTSPNPESPSR) lie on the Extracellular side of the membrane. The helical transmembrane segment at 292 to 312 (GFIIAILVLVANFLQTLLLQQ) threads the bilayer. The Cytoplasmic portion of the chain corresponds to 313–362 (YNQLIMLLGMRWKTELLASIYRKSLLLSSSARQNRSIGDIINYMAVDTQK). A helical transmembrane segment spans residues 363-383 (ISDLPIYLFIIVSGPFQIALA). The Extracellular segment spans residues 384–394 (LSNLYHLMGYS). Residues 395–415 (AFTGVAASVILFPCNIIVANV) form a helical membrane-spanning segment. The Cytoplasmic portion of the chain corresponds to 416–480 (YKKFQSILMK…KIGFITAIGD (65 aa)). A helical membrane pass occupies residues 481–501 (FAWIFTTIIVTTVAFGAFIIF). The Extracellular segment spans residues 502-511 (HGKTQALTAD). The helical transmembrane segment at 512–532 (IVFPAVSLFNLLQFPLAMLPT) threads the bilayer. The Cytoplasmic segment spans residues 533 to 899 (VISSLLEASV…VYWMYFKSCS (367 aa)). The 230-residue stretch at 575 to 804 (LEIKSGTFSW…TNSELKQQLS (230 aa)) folds into the ABC transporter 1 domain. 614 to 621 (GKVGAGKS) is an ATP binding site. Disordered regions lie at residues 805–824 (EFNDEKDTQPLPEHTTSYPS) and 840–869 (TYSSSERKDSSNKYKSRKRNPIRQKVTEDD). A helical transmembrane segment spans residues 900–920 (IGLILLYFFFIISGIMMNVAT). The region spanning 903–1189 (ILLYFFFIIS…IVQQSVDAEN (287 aa)) is the ABC transmembrane type-1 2 domain. The Extracellular segment spans residues 921 to 939 (NVWLKHWSEENGKSSSELN). A helical membrane pass occupies residues 940–960 (PSPYFYLGIYLFFGFLSCAFI). The Cytoplasmic portion of the chain corresponds to 961–1033 (SSSSLTMTVL…FFFRNSIQVL (73 aa)). A helical membrane pass occupies residues 1034 to 1054 (FILGVICYSAPLSLLLIVPLF). Over 1055 to 1465 (FLYLYNRAYY…YSLAKESGLI (411 aa)) the chain is Extracellular. The ABC transporter 2 domain occupies 1226–1460 (VSFNHYSAKY…KDSMFYSLAK (235 aa)). 1260 to 1267 (GRTGAGKS) serves as a coordination point for ATP.

It belongs to the ABC transporter superfamily.

Its subcellular location is the vacuole membrane. Its function is as follows. Iron-regulated vacuolar transporter that mobilizes stored heme from the vacuole to the cytosol in response to iron deficiency. The polypeptide is Vacuolar heme ABC transmembrane exporter abc3 (Schizosaccharomyces pombe (strain 972 / ATCC 24843) (Fission yeast)).